A 798-amino-acid polypeptide reads, in one-letter code: Phenylalanine--tRNA ligase beta subunit (798 aa).

A tRNA-binding domain is found at 39–148 (SKHLGGFVVG…VTLAVGASLL (110 aa)). A B5 domain is found at 401–476 (DWQKSIVLRP…RINGYDNIPA (76 aa)). 4 residues coordinate Mg(2+): Asp-454, Asp-460, Glu-463, and Glu-464. One can recognise an FDX-ACB domain in the interval 704-797 (SALQPLDRDF…VAKATGGELR (94 aa)).

The protein belongs to the phenylalanyl-tRNA synthetase beta subunit family. Type 1 subfamily. In terms of assembly, tetramer of two alpha and two beta subunits. It depends on Mg(2+) as a cofactor.

The protein resides in the cytoplasm. The catalysed reaction is tRNA(Phe) + L-phenylalanine + ATP = L-phenylalanyl-tRNA(Phe) + AMP + diphosphate + H(+). The polypeptide is Phenylalanine--tRNA ligase beta subunit (Paramagnetospirillum magneticum (strain ATCC 700264 / AMB-1) (Magnetospirillum magneticum)).